The primary structure comprises 534 residues: MSWESPVNYSVGGEDLDLDLGAFLGSLSDFDGQIEPAHSLEDEYSGQSGQGADDDPDSDGPKVLTIMASIDAIHRHLENERKKGNGKANVAIKLKDPTMRKSITFSIPELQSPTTTASSAGSPSCAPLRLPSPEAFDLGEAIFSHPTAGSSFPEEVTPAAEDDVLSSIASPFATPEGLFFPQDEDVLPSIAPLLKAANLAHATEPSLGLISPRATASESSMMPDEEAMADVVQYRDGTGTTPESLSPGDMEQDEWPHTVSSRQTRSRQAARACQTPSTMSTKDKKCIDSSSCSLKQMNSQHQKRNSIETAPSRTIKRPRVESPDLLTLIPNHDEYQRVQELTAALDPLLAYKMVRNARAILPQSVAEDMAHSADMEVDGPLHYQNNQQSPSSQEEIMQQFCETVRRIEWVERAAFKSMVEYRVLFVQLYQHYLRLQEIVVTRKGERRVTLAKEQLYRTLYPGVEKMTSSGLTSDEWEKFNRCIRRGKQWNTIASKLGVGILQRMPSSICHSWVEQKLQTKEQLHIWIEIVSLLA.

Disordered stretches follow at residues 34-61 (IEPAHSLEDEYSGQSGQGADDDPDSDGP), 110-130 (LQSPTTTASSAGSPSCAPLRL), and 236-287 (DGTG…KKCI). 2 stretches are compositionally biased toward low complexity: residues 112–127 (SPTTTASSAGSPSCAP) and 258–275 (TVSSRQTRSRQAARACQT).

It functions in the pathway secondary metabolite biosynthesis. In terms of biological role, part of the gene cluster that mediates the biosynthesis of hypothemycin, a resorcylic acid lactone (RAL) that irreversibly inhibits a subset of protein kinases with a conserved cysteine in the ATP binding site such as human ERK2. The first step is performed by both PKSs hmp3 and hmp8 and leads to the production of 7',8'-dehydrozearalenol (DHZ). The highly reducing PKS hpm8 synthesizes the reduced hexaketide (7S,11S,2E,8E)-7,11-dihydroxy-dodeca-2,8-dienoate, which is transferred downstream to the non-reducing PKS hpm3. Hpm3 then extends the reduced hexaketide to a nonaketide, after which regioselective cyclization and macrolactonization affords DHZ. The next step is the conversion of DHZ into aigialomycin C and is performed by the O-methyltransferase hmp5, the FAD-binding monooxygenase hmp7, and the cytochrome P450 monooxygenase hmp1. The wide substrate tolerance of the hmp5 and hmp7 implies that the reactions from DHZ to aigialomycin C can occur in any order. The steps from aigialomycin C to hypothemycin are less well established. The FAD-linked oxidoreductase hmp9 presumably catalyzes oxidation of the C-6' hydroxyl to a ketone. The timing of this oxidation is important, since the resulting enone functional group is a Michael acceptor that can react spontaneously with glutathione, an abundant metabolite in fungal cells. The glutathione S-transferase hmp2 catalyzes cis-trans isomerization of the 7',8' double bond with equilibrium favoring the trans isomer. The hpm6-encoded transporter might preferentially pump hypothemycin out of the cell relative to the trans isomer aigialomycin A. The cis-to-trans isomerization may be coupled with C-4' hydroxylation, since all known hypothemycin analogs containing the enone functional group also have hydroxyl groups at both C-4' and C-5'. The chain is Hypothemycin biosynthesis cluster protein hpm4 from Hypomyces subiculosus (Nectria subiculosa).